Consider the following 199-residue polypeptide: Recombination protein RecR (199 aa).

The segment at 58 to 73 (CQTCHHLSAEPTCEIC) adopts a C4-type zinc-finger fold. The region spanning 81-175 (GQICVVADSR…RVSRIAYGLP (95 aa)) is the Toprim domain.

It belongs to the RecR family.

Its function is as follows. May play a role in DNA repair. It seems to be involved in an RecBC-independent recombinational process of DNA repair. It may act with RecF and RecO. This Synechococcus sp. (strain WH7803) protein is Recombination protein RecR.